Here is a 604-residue protein sequence, read N- to C-terminus: Pescadillo homolog (604 aa).

The tract at residues 275–299 is disordered; sequence NSEPAGLIEDKEGEDNKESSKTDES. Residues 282–299 show a composition bias toward basic and acidic residues; the sequence is IEDKEGEDNKESSKTDES. One can recognise a BRCT domain in the interval 337–427; sequence ECRSLFKNLK…IILPTEGYIV (91 aa). Disordered stretches follow at residues 518 to 557 and 574 to 604; these read KTFS…DAAD and IEIN…AKGR. Basic and acidic residues-rich tracts occupy residues 531 to 557 and 577 to 586; these read VVDK…DAAD and NQERKKDKVN.

The protein belongs to the pescadillo family.

Its subcellular location is the nucleus. It localises to the nucleolus. The protein localises to the nucleoplasm. In terms of biological role, required for maturation of ribosomal RNAs and formation of the large ribosomal subunit. This Oryza sativa subsp. japonica (Rice) protein is Pescadillo homolog (PES).